The following is a 66-amino-acid chain: Large ribosomal subunit protein bL35 (66 aa).

The protein belongs to the bacterial ribosomal protein bL35 family.

In Synechococcus sp. (strain ATCC 27144 / PCC 6301 / SAUG 1402/1) (Anacystis nidulans), this protein is Large ribosomal subunit protein bL35.